A 140-amino-acid chain; its full sequence is MSIMEVEVVSSEQKIYSGEATFIVVPTVQGELGIYPRHEPIMSLVRPGALRLTVPGEDKEVLVAVSGGVLEVQPDKVTVLADVAVRSAEMDQARAEEAKKAAEAGISQAKDDKALAEAHKALAAAIAQLKTLDYIRSHKK.

It belongs to the ATPase epsilon chain family. In terms of assembly, F-type ATPases have 2 components, CF(1) - the catalytic core - and CF(0) - the membrane proton channel. CF(1) has five subunits: alpha(3), beta(3), gamma(1), delta(1), epsilon(1). CF(0) has three main subunits: a, b and c.

The protein localises to the cell inner membrane. Produces ATP from ADP in the presence of a proton gradient across the membrane. The sequence is that of ATP synthase epsilon chain from Neisseria meningitidis serogroup C (strain 053442).